The chain runs to 150 residues: MNLWLLACLVAGFLGAWAPAVHTQGVFEDCCLAYHYPIGWAVLRRAWTYRIQEVSGSCNLPAAIFYLPKRHRKVCGNPKSREVQRAMKLLDARNKVFAKLHHNTQTFQAGPHAVKKLSSGNSKLSSSKFSNPISSSKRNVSLLISANSGL.

An N-terminal signal peptide occupies residues 1-23 (MNLWLLACLVAGFLGAWAPAVHT). 2 disulfides stabilise this stretch: cysteine 30-cysteine 58 and cysteine 31-cysteine 75.

It belongs to the intercrine beta (chemokine CC) family. In terms of tissue distribution, specifically expressed by thymic dendritic cells. High levels in thymus and small intestine.

The protein resides in the secreted. Functionally, potentially involved in T-cell development. Recombinant protein shows chemotactic activity on thymocytes, macrophages, THP-1 cells, and dendritics cells but is inactive on peripheral blood lymphocytes and neutrophils. Binds to CCR9. Isoform 2 is an antagonist of isoform 1. Binds to atypical chemokine receptor ACKR4 and mediates the recruitment of beta-arrestin (ARRB1/2) to ACKR4. The polypeptide is C-C motif chemokine 25 (CCL25) (Homo sapiens (Human)).